The following is a 449-amino-acid chain: Ribulose bisphosphate carboxylase large chain (449 aa).

The propeptide occupies 1 to 2 (MS). At P3 the chain carries N-acetylproline. K14 is modified (N6,N6,N6-trimethyllysine). Substrate-binding residues include N123 and T173. K175 functions as the Proton acceptor in the catalytic mechanism. Residue K177 participates in substrate binding. Residues K201, D203, and E204 each contribute to the Mg(2+) site. K201 is subject to N6-carboxylysine. H294 functions as the Proton acceptor in the catalytic mechanism. Substrate contacts are provided by R295, H327, and S379.

The protein belongs to the RuBisCO large chain family. Type I subfamily. In terms of assembly, heterohexadecamer of 8 large chains and 8 small chains; disulfide-linked. The disulfide link is formed within the large subunit homodimers. Mg(2+) is required as a cofactor. Post-translationally, the disulfide bond which can form in the large chain dimeric partners within the hexadecamer appears to be associated with oxidative stress and protein turnover.

It localises to the plastid. The protein localises to the chloroplast. The enzyme catalyses 2 (2R)-3-phosphoglycerate + 2 H(+) = D-ribulose 1,5-bisphosphate + CO2 + H2O. The catalysed reaction is D-ribulose 1,5-bisphosphate + O2 = 2-phosphoglycolate + (2R)-3-phosphoglycerate + 2 H(+). Its function is as follows. RuBisCO catalyzes two reactions: the carboxylation of D-ribulose 1,5-bisphosphate, the primary event in carbon dioxide fixation, as well as the oxidative fragmentation of the pentose substrate in the photorespiration process. Both reactions occur simultaneously and in competition at the same active site. In Hippocratea richardiana, this protein is Ribulose bisphosphate carboxylase large chain.